A 1170-amino-acid polypeptide reads, in one-letter code: Cellulose synthase-like protein D2 (1170 aa).

2 disordered regions span residues methionine 1–glycine 75 and asparagine 269–serine 295. Residues arginine 10 to glycine 24 are compositionally biased toward low complexity. Positions asparagine 273 to glycine 288 are enriched in gly residues. The next 2 helical transmembrane spans lie at valine 311 to alanine 331 and alanine 341 to leucine 361. Aspartate 441 is a catalytic residue. A coiled-coil region spans residues histidine 527–lysine 551. Aspartate 873 is an active-site residue. 6 consecutive transmembrane segments (helical) span residues isoleucine 955–valine 975, threonine 981–isoleucine 1001, leucine 1027–leucine 1047, serine 1070–phenylalanine 1090, leucine 1104–glycine 1124, and threonine 1134–isoleucine 1154.

The protein belongs to the glycosyltransferase 2 family. Plant cellulose synthase-like D subfamily.

The protein localises to the golgi apparatus membrane. Functionally, thought to be a Golgi-localized beta-glycan synthase that polymerize the backbones of noncellulosic polysaccharides (hemicelluloses) of plant cell wall. The sequence is that of Cellulose synthase-like protein D2 (CSLD2) from Oryza sativa subsp. indica (Rice).